The primary structure comprises 493 residues: UDP-N-acetylmuramate--L-alanine ligase (493 aa).

Residue 126–132 (GTHGKTT) coordinates ATP.

This sequence belongs to the MurCDEF family.

It localises to the cytoplasm. The enzyme catalyses UDP-N-acetyl-alpha-D-muramate + L-alanine + ATP = UDP-N-acetyl-alpha-D-muramoyl-L-alanine + ADP + phosphate + H(+). The protein operates within cell wall biogenesis; peptidoglycan biosynthesis. Functionally, cell wall formation. This Hamiltonella defensa subsp. Acyrthosiphon pisum (strain 5AT) protein is UDP-N-acetylmuramate--L-alanine ligase.